The sequence spans 137 residues: Large ribosomal subunit protein uL16 (137 aa).

This sequence belongs to the universal ribosomal protein uL16 family. In terms of assembly, part of the 50S ribosomal subunit.

Functionally, binds 23S rRNA and is also seen to make contacts with the A and possibly P site tRNAs. The polypeptide is Large ribosomal subunit protein uL16 (Beijerinckia indica subsp. indica (strain ATCC 9039 / DSM 1715 / NCIMB 8712)).